The primary structure comprises 258 residues: Pimeloyl-[acyl-carrier protein] methyl ester esterase (258 aa).

The region spanning 16–242 (LVLLHGWGLN…AAHAPFISHP (227 aa)) is the AB hydrolase-1 domain. Residues W22, 82–83 (SL), and 143–147 (FLALQ) contribute to the substrate site. S82 functions as the Nucleophile in the catalytic mechanism. Catalysis depends on residues D207 and H235. H235 is a substrate binding site.

It belongs to the AB hydrolase superfamily. Carboxylesterase BioH family. As to quaternary structure, monomer.

It is found in the cytoplasm. The enzyme catalyses 6-carboxyhexanoyl-[ACP] methyl ester + H2O = 6-carboxyhexanoyl-[ACP] + methanol + H(+). It participates in cofactor biosynthesis; biotin biosynthesis. Functionally, the physiological role of BioH is to remove the methyl group introduced by BioC when the pimeloyl moiety is complete. It allows to synthesize pimeloyl-ACP via the fatty acid synthetic pathway through the hydrolysis of the ester bonds of pimeloyl-ACP esters. This Edwardsiella ictaluri (strain 93-146) protein is Pimeloyl-[acyl-carrier protein] methyl ester esterase.